Consider the following 268-residue polypeptide: NH(3)-dependent NAD(+) synthetase (268 aa).

Position 46–53 (46–53 (GISGGQDS)) interacts with ATP. D52 lines the Mg(2+) pocket. R140 is a binding site for deamido-NAD(+). Position 160 (T160) interacts with ATP. E165 contacts Mg(2+). 2 residues coordinate deamido-NAD(+): K173 and D180. Residues K189 and T211 each coordinate ATP. Residue 260 to 261 (HK) participates in deamido-NAD(+) binding.

It belongs to the NAD synthetase family. In terms of assembly, homodimer.

It catalyses the reaction deamido-NAD(+) + NH4(+) + ATP = AMP + diphosphate + NAD(+) + H(+). Its pathway is cofactor biosynthesis; NAD(+) biosynthesis; NAD(+) from deamido-NAD(+) (ammonia route): step 1/1. In terms of biological role, catalyzes the ATP-dependent amidation of deamido-NAD to form NAD. Uses ammonia as a nitrogen source. In Buchnera aphidicola subsp. Schizaphis graminum (strain Sg), this protein is NH(3)-dependent NAD(+) synthetase.